Reading from the N-terminus, the 584-residue chain is 2-succinyl-5-enolpyruvyl-6-hydroxy-3-cyclohexene-1-carboxylate synthase (584 aa).

It belongs to the TPP enzyme family. MenD subfamily. In terms of assembly, homodimer. Mg(2+) serves as cofactor. Requires Mn(2+) as cofactor. It depends on thiamine diphosphate as a cofactor.

It carries out the reaction isochorismate + 2-oxoglutarate + H(+) = 5-enolpyruvoyl-6-hydroxy-2-succinyl-cyclohex-3-ene-1-carboxylate + CO2. Its pathway is quinol/quinone metabolism; 1,4-dihydroxy-2-naphthoate biosynthesis; 1,4-dihydroxy-2-naphthoate from chorismate: step 2/7. It functions in the pathway quinol/quinone metabolism; menaquinone biosynthesis. Catalyzes the thiamine diphosphate-dependent decarboxylation of 2-oxoglutarate and the subsequent addition of the resulting succinic semialdehyde-thiamine pyrophosphate anion to isochorismate to yield 2-succinyl-5-enolpyruvyl-6-hydroxy-3-cyclohexene-1-carboxylate (SEPHCHC). This Bacillus thuringiensis subsp. konkukian (strain 97-27) protein is 2-succinyl-5-enolpyruvyl-6-hydroxy-3-cyclohexene-1-carboxylate synthase.